The sequence spans 370 residues: MSKTSVDKLLRIPQSLRDSISRTRVDYRHLGNCGLRVSNPILGGLHIGNSRWLPWVLNEEDAMPILKAAYDRGINTWDTANVYSNGESEKVIAKALRKYNIPRSKVILMTKCYRVVCDSENFDPGSGVTMHHELADKSKDYVNQWGLSRAAIFNAVEASLERLGTHYIDIFQIHRFDPTVPIAETMSALNDLVKAGMVRYLGASSMWTYQFAAMQNLAHAKGWTKFVSMQNHYNLIYREEEREMIRYCNDTGVGLIPWAPLASGRLARRPSQQSVSIRASNSRNGSIYEADDSNTDKIVSRVEEIAVKRNWPMSHVALAWLNKRVTAPIIGFSTVQRIEEALAAVGKELSEDEERYLEELYAPRPIQGHS.

Position 78 (Asp78) interacts with NADP(+). The Proton donor role is filled by Tyr83. A substrate-binding site is contributed by His174. Residues 204-205, Gln230, 259-269, and 333-341 each bind NADP(+); these read SS, APLASGRLARR, and STVQRIEEA.

The protein belongs to the aldo/keto reductase family.

Its pathway is secondary metabolite biosynthesis. Functionally, aldo-keto reductase; part of the gene cluster that mediates the biosynthesis of sansalvamide, a cyclic pentadepsipeptide that shows promising results as potential anti-cancer drug. The nonribosmal peptide synthetase NRPS30 produces sansalvamide by incorporating successively one phenylalanine, one leucine, one alpha-hydroxyisocaproic acid (HICA), one valine and one leucine before sansalvamide is released from by cyclization by the terminal C domain of NRPS30. The HICA residue is probably provided by reduction of alpha-ketoisocaproate by the cluster-specific aldo-keto reductase (NECHADRAFT_45914). This is Aldo-keto reductase NECHADRAFT_45914 from Fusarium vanettenii (strain ATCC MYA-4622 / CBS 123669 / FGSC 9596 / NRRL 45880 / 77-13-4) (Fusarium solani subsp. pisi).